We begin with the raw amino-acid sequence, 740 residues long: ATP-dependent RNA helicase DDX1 (740 aa).

Residues 1–448 (MAAFSEMGVM…ETVHHVVVPV (448 aa)) form an interaction with dsRNA region. Residues 2–428 (AAFSEMGVMP…SEKIMHFPTW (427 aa)) enclose the Helicase ATP-binding domain. ATP is bound at residue 46–53 (AETGSGKT). In terms of domain architecture, B30.2/SPRY spans 70-247 (DQQEGKKGKA…LKFNFGEEDF (178 aa)). Positions 370–373 (DEAD) match the DEAD box motif. A Helicase C-terminal domain is found at 493–681 (KGEYIVRAIK…QVEPDIKVPL (189 aa)).

This sequence belongs to the DEAD box helicase family. DDX1 subfamily.

The protein resides in the nucleus. The protein localises to the cytoplasm. It localises to the cytoplasmic granule. It is found in the cytosol. Its subcellular location is the mitochondrion. The catalysed reaction is ATP + H2O = ADP + phosphate + H(+). Functionally, acts as an ATP-dependent RNA helicase, able to unwind both RNA-RNA and RNA-DNA duplexes. Possesses 5' single-stranded RNA overhang nuclease activity. Acts as a positive regulator of transcription. May be involved in 3'-end cleavage and polyadenylation of pre-mRNAs. Binds DNA and RNA. Component of the tRNA-splicing ligase complex required to facilitate the enzymatic turnover of catalytic subunit rtcb. Binds (via helicase ATP-binding domain) on both short and long poly(I:C) dsRNA. The sequence is that of ATP-dependent RNA helicase DDX1 (ddx1) from Xenopus laevis (African clawed frog).